A 437-amino-acid chain; its full sequence is 3-phosphoshikimate 1-carboxyvinyltransferase (437 aa).

K26, S27, and R31 together coordinate 3-phosphoshikimate. K26 provides a ligand contact to phosphoenolpyruvate. Phosphoenolpyruvate-binding residues include G99 and R127. 3-phosphoshikimate is bound by residues S172, Q174, D320, and K347. Q174 lines the phosphoenolpyruvate pocket. The active-site Proton acceptor is D320. Phosphoenolpyruvate contacts are provided by R351 and R392.

Belongs to the EPSP synthase family. As to quaternary structure, monomer.

The protein localises to the cytoplasm. The catalysed reaction is 3-phosphoshikimate + phosphoenolpyruvate = 5-O-(1-carboxyvinyl)-3-phosphoshikimate + phosphate. The protein operates within metabolic intermediate biosynthesis; chorismate biosynthesis; chorismate from D-erythrose 4-phosphate and phosphoenolpyruvate: step 6/7. Functionally, catalyzes the transfer of the enolpyruvyl moiety of phosphoenolpyruvate (PEP) to the 5-hydroxyl of shikimate-3-phosphate (S3P) to produce enolpyruvyl shikimate-3-phosphate and inorganic phosphate. In Methylococcus capsulatus (strain ATCC 33009 / NCIMB 11132 / Bath), this protein is 3-phosphoshikimate 1-carboxyvinyltransferase.